Reading from the N-terminus, the 283-residue chain is MPKYALVINEDKPMAVTTGEEILQRLEASGAAVLLHPAAAGRLGRPDLAAPEGPAWGEVDMLIVLGGDGTLIRAVQRVAPYGVPVLGINTGHLGFLTAMESGDALAELDRVLAGSYLLEERMMLEATVVRDGLALATMPALNDAVISKGPRARMVHLEVSVGETVVARYRADGVIVATPTGSTAYSLSAGGPVVEPTVDCLLVTPICPHTMSARSIVVGADVALAIRVAASPGEVGLSADGSDPFPLLPGDVVRVGRAPYTARLVRLPGYRFYDVLRQKLSGT.

D68 functions as the Proton acceptor in the catalytic mechanism. NAD(+)-binding positions include 68 to 69, R73, 142 to 143, R153, R170, D172, and 183 to 188; these read DG, ND, and TAYSLS.

The protein belongs to the NAD kinase family. The cofactor is a divalent metal cation.

It localises to the cytoplasm. The catalysed reaction is NAD(+) + ATP = ADP + NADP(+) + H(+). In terms of biological role, involved in the regulation of the intracellular balance of NAD and NADP, and is a key enzyme in the biosynthesis of NADP. Catalyzes specifically the phosphorylation on 2'-hydroxyl of the adenosine moiety of NAD to yield NADP. The sequence is that of NAD kinase from Symbiobacterium thermophilum (strain DSM 24528 / JCM 14929 / IAM 14863 / T).